A 250-amino-acid polypeptide reads, in one-letter code: 7-cyano-7-deazaguanine synthase (250 aa).

ATP is bound at residue 21–31 (FSGGQDSSVCL). C209, C224, C227, and C230 together coordinate Zn(2+).

This sequence belongs to the QueC family. The cofactor is Zn(2+).

The catalysed reaction is 7-carboxy-7-deazaguanine + NH4(+) + ATP = 7-cyano-7-deazaguanine + ADP + phosphate + H2O + H(+). It participates in purine metabolism; 7-cyano-7-deazaguanine biosynthesis. In terms of biological role, catalyzes the ATP-dependent conversion of 7-carboxy-7-deazaguanine (CDG) to 7-cyano-7-deazaguanine (preQ(0)). This Caulobacter sp. (strain K31) protein is 7-cyano-7-deazaguanine synthase.